The sequence spans 340 residues: Guanine nucleotide-binding protein G(I)/G(S)/G(T) subunit beta-1 (340 aa).

WD repeat units lie at residues 53-83 (GHLAKIYAMHWGSDSRNLVSASQDGKLIVWD), 95-125 (LRSSWVMTCAYAPSGSYVACGGLDNICSIYS), 141-170 (GHTGYLSCCRFVDDNQIVTSSGDMTCALWD), 182-212 (GHTGDVMSLSLSPNMRTFTSGACDASAKLWD), 224-254 (GHESDINAVTFFPNGHAFATGSDDATCRLFD), 268-298 (NIICGITSVAFSKSGKLLLAGYDDFNCNVWD), and 310-340 (GHDNRVSCLGVTEDGMAVATGSWDSFLKIWN).

This sequence belongs to the WD repeat G protein beta family. As to quaternary structure, g proteins are composed of 3 units, alpha, beta and gamma.

Guanine nucleotide-binding proteins (G proteins) are involved as a modulator or transducer in various transmembrane signaling systems. The beta and gamma chains are required for the GTPase activity, for replacement of GDP by GTP, and for G protein-effector interaction. This is Guanine nucleotide-binding protein G(I)/G(S)/G(T) subunit beta-1 (GBETA1) from Homarus americanus (American lobster).